A 371-amino-acid polypeptide reads, in one-letter code: Forkhead box protein J1.2 (371 aa).

2 disordered regions span residues 45–74 (ANSR…APRT) and 80–99 (VAVP…PVQE). Positions 109–203 (KPPYSYATLI…VNGVLKRRRM (95 aa)) form a DNA-binding region, fork-head. Positions 228-248 (PSSHHMQHISGGHRQSRRYEK) are disordered.

Belongs to the FOXJ1 family. As to expression, expressed diffusely through much of gastrula and neurula stage embryos. At stage 23 (late neurula), limited to the otic vesicle. By stage 28 (tailbud), also expressed transiently in the presumptive nephrostomes of the pronephros. At stage 35 (early tadpole), expressed broadly in the head and strongly expressed in the developing gill structures.

Its subcellular location is the nucleus. Functionally, key transcription factor required for motile ciliogenesis. Activates genes essential for motile cilia formation and function. The sequence is that of Forkhead box protein J1.2 from Xenopus tropicalis (Western clawed frog).